The sequence spans 565 residues: CTP synthase (565 aa).

Positions methionine 1 to proline 268 are amidoligase domain. Serine 14 is a binding site for CTP. Position 14 (serine 14) interacts with UTP. Serine 15–isoleucine 20 is an ATP binding site. Tyrosine 55 provides a ligand contact to L-glutamine. Aspartate 72 serves as a coordination point for ATP. Aspartate 72 and glutamate 142 together coordinate Mg(2+). Residues aspartate 149–glutamate 151, lysine 189–glutamine 194, and lysine 225 each bind CTP. UTP contacts are provided by residues lysine 189–glutamine 194 and lysine 225. Residues proline 301–glutamate 543 form the Glutamine amidotransferase type-1 domain. Position 363 (glycine 363) interacts with L-glutamine. Residue cysteine 390 is the Nucleophile; for glutamine hydrolysis of the active site. Residues leucine 391–glutamine 394, glutamate 414, and arginine 471 contribute to the L-glutamine site. Catalysis depends on residues histidine 516 and glutamate 518. Residues aspartate 545–methionine 565 form a disordered region.

It belongs to the CTP synthase family. As to quaternary structure, homotetramer.

It catalyses the reaction UTP + L-glutamine + ATP + H2O = CTP + L-glutamate + ADP + phosphate + 2 H(+). The catalysed reaction is L-glutamine + H2O = L-glutamate + NH4(+). The enzyme catalyses UTP + NH4(+) + ATP = CTP + ADP + phosphate + 2 H(+). The protein operates within pyrimidine metabolism; CTP biosynthesis via de novo pathway; CTP from UDP: step 2/2. Allosterically activated by GTP, when glutamine is the substrate; GTP has no effect on the reaction when ammonia is the substrate. The allosteric effector GTP functions by stabilizing the protein conformation that binds the tetrahedral intermediate(s) formed during glutamine hydrolysis. Inhibited by the product CTP, via allosteric rather than competitive inhibition. Functionally, catalyzes the ATP-dependent amination of UTP to CTP with either L-glutamine or ammonia as the source of nitrogen. Regulates intracellular CTP levels through interactions with the four ribonucleotide triphosphates. The chain is CTP synthase from Salinibacter ruber (strain DSM 13855 / M31).